A 708-amino-acid chain; its full sequence is GID complex associated protein 12 (708 aa).

Low complexity predominate over residues 381–396 (SSRRNSSFSTASSEPR). The tract at residues 381 to 403 (SSRRNSSFSTASSEPRPLSRRRR) is disordered.

In terms of assembly, interacts with core components of the GID/CTLH ubiquitin ligase complex. GID12 binds both the substrate receptor GID4 and the tip of GID5 in the scaffolding module, sealing GID4 onto the scaffold.

Functionally, regulator of the GID E3 ligase complex. Modulates both assembly of the substrate receptor GID4 into the GID E3 ligase complex and its activity toward its substrates. GID12-binding remodels the N-degron binding pocket in the GID(SR4) complex, and could limit substrate accessibility of a bulky substrate to a ubiquitynation active site, thereby stabilizing gluconeogenic enzyme substrates. Involved in actin patch formation. This Saccharomyces cerevisiae (strain ATCC 204508 / S288c) (Baker's yeast) protein is GID complex associated protein 12.